A 431-amino-acid polypeptide reads, in one-letter code: Enolase (431 aa).

Residue Gln164 coordinates (2R)-2-phosphoglycerate. Glu206 functions as the Proton donor in the catalytic mechanism. Asp243, Glu288, and Asp315 together coordinate Mg(2+). Residues Lys340, Arg369, Ser370, and Lys391 each contribute to the (2R)-2-phosphoglycerate site. The active-site Proton acceptor is the Lys340.

This sequence belongs to the enolase family. Requires Mg(2+) as cofactor.

Its subcellular location is the cytoplasm. The protein localises to the secreted. The protein resides in the cell surface. The enzyme catalyses (2R)-2-phosphoglycerate = phosphoenolpyruvate + H2O. It participates in carbohydrate degradation; glycolysis; pyruvate from D-glyceraldehyde 3-phosphate: step 4/5. In terms of biological role, catalyzes the reversible conversion of 2-phosphoglycerate (2-PG) into phosphoenolpyruvate (PEP). It is essential for the degradation of carbohydrates via glycolysis. This Fervidobacterium nodosum (strain ATCC 35602 / DSM 5306 / Rt17-B1) protein is Enolase.